Here is a 157-residue protein sequence, read N- to C-terminus: Protein-export protein SecB (157 aa).

It belongs to the SecB family. Homotetramer, a dimer of dimers. One homotetramer interacts with 1 SecA dimer.

Its subcellular location is the cytoplasm. In terms of biological role, one of the proteins required for the normal export of preproteins out of the cell cytoplasm. It is a molecular chaperone that binds to a subset of precursor proteins, maintaining them in a translocation-competent state. It also specifically binds to its receptor SecA. This chain is Protein-export protein SecB, found in Methylobacillus flagellatus (strain ATCC 51484 / DSM 6875 / VKM B-1610 / KT).